We begin with the raw amino-acid sequence, 1396 residues long: Sterol 3-beta-glucosyltransferase (1396 aa).

Residues 1 to 16 show a composition bias toward basic and acidic residues; sequence MRPFIDDAKRRAERRL. 4 disordered regions span residues 1–21, 40–64, 83–196, and 209–232; these read MRPFIDDAKRRAERRLSASRQ, DADDAQMDYTAPPSSNDSRDGMQYM, ARFD…RAAP, and ETENPEENPQTLEEKEQGVSKKSQ. Positions 94–107 are enriched in basic and acidic residues; the sequence is ETRTRPRFLSEKPF. Residues 186 to 196 are compositionally biased toward low complexity; it reads RPRSATPRAAP. In terms of domain architecture, GRAM 1 spans 238–273; the sequence is RQLMEMFRFPTPEKVVVEYACSLLQSMLLQGYMYVT. Residues 289–388 form the PH domain; sequence RVIKSGYIYK…WVRALQKVIF (100 aa). 2 disordered regions span residues 460–532 and 571–627; these read GTPT…SSSS and TIHT…ESKD. Polar residues-rich tracts occupy residues 484–532 and 571–584; these read GSQN…SSSS and TIHTWQQRTSGTAR. Basic and acidic residues predominate over residues 588 to 602; sequence RHSDEITRSTTEHGL. A GRAM 2 domain is found at 717–783; it reads ERFRAHFALP…HDIENVEKEK (67 aa). Positions 905, 906, 908, 1208, 1210, 1223, 1227, 1228, 1247, and 1248 each coordinate UDP-alpha-D-glucose. Residues 1324 to 1343 are compositionally biased toward low complexity; it reads SSISSTPFSPTPSTKTSDDQ. The segment at 1324 to 1346 is disordered; sequence SSISSTPFSPTPSTKTSDDQNAN.

Belongs to the glycosyltransferase 28 family.

It localises to the cytoplasm. It is found in the preautophagosomal structure membrane. It catalyses the reaction a sterol + UDP-alpha-D-glucose = a sterol 3-beta-D-glucoside + UDP + H(+). The catalysed reaction is ergosterol + UDP-alpha-D-glucose = ergosteryl 3-beta-D-glucoside + UDP + H(+). In terms of biological role, sterol glycosyltransferase responsible for the glycosylation of ergosterol to form ergosterol-glucoside. This Emericella nidulans (strain FGSC A4 / ATCC 38163 / CBS 112.46 / NRRL 194 / M139) (Aspergillus nidulans) protein is Sterol 3-beta-glucosyltransferase.